The primary structure comprises 350 residues: S-adenosylmethionine:tRNA ribosyltransferase-isomerase (350 aa).

It belongs to the QueA family. In terms of assembly, monomer.

The protein resides in the cytoplasm. It catalyses the reaction 7-aminomethyl-7-carbaguanosine(34) in tRNA + S-adenosyl-L-methionine = epoxyqueuosine(34) in tRNA + adenine + L-methionine + 2 H(+). The protein operates within tRNA modification; tRNA-queuosine biosynthesis. Its function is as follows. Transfers and isomerizes the ribose moiety from AdoMet to the 7-aminomethyl group of 7-deazaguanine (preQ1-tRNA) to give epoxyqueuosine (oQ-tRNA). The chain is S-adenosylmethionine:tRNA ribosyltransferase-isomerase from Bacillus cytotoxicus (strain DSM 22905 / CIP 110041 / 391-98 / NVH 391-98).